The sequence spans 1452 residues: ABC-type transporter adrC (1452 aa).

Positions Met1–Asn38 are disordered. Residues Ser19 to Glu28 show a composition bias toward polar residues. Residues Lys116–Pro378 enclose the ABC transporter 1 domain. 6 helical membrane-spanning segments follow: residues Ile487–Leu507, Val524–Tyr544, Val569–Phe589, Ser598–Phe618, Ala631–Pro651, and Gly738–Ile758. The region spanning Phe813–Gly1055 is the ABC transporter 2 domain. Gly849–Thr856 contacts ATP. Helical transmembrane passes span Tyr1149–Trp1169, Val1181–Pro1201, Val1224–Thr1244, Leu1264–Val1284, Val1287–Phe1307, Ile1322–Gly1344, and Phe1415–Leu1435.

This sequence belongs to the ABC transporter superfamily. ABCG family. PDR (TC 3.A.1.205) subfamily.

It localises to the membrane. Functionally, ABC-type transporter; part of the gene cluster that mediates the biosynthesis of the meroterpenoid compound andrastin A, a promising antitumoral compound. Is required for the production of andrastin A but does not have a significant role in its secretion. This is ABC-type transporter adrC from Penicillium roqueforti.